The sequence spans 286 residues: Polyamine aminopropyltransferase (286 aa).

The PABS domain occupies 5-242 (DNWFTEVLEE…GWWSATLASK (238 aa)). S-methyl-5'-thioadenosine is bound at residue glutamine 35. Residues histidine 66 and aspartate 90 each contribute to the spermidine site. Residues aspartate 110 and 141-142 (DG) each bind S-methyl-5'-thioadenosine. The Proton acceptor role is filled by aspartate 160. 160–163 (DSTD) contributes to the spermidine binding site.

It belongs to the spermidine/spermine synthase family. As to quaternary structure, homodimer or homotetramer.

The protein resides in the cytoplasm. The enzyme catalyses S-adenosyl 3-(methylsulfanyl)propylamine + putrescine = S-methyl-5'-thioadenosine + spermidine + H(+). It participates in amine and polyamine biosynthesis; spermidine biosynthesis; spermidine from putrescine: step 1/1. Its function is as follows. Catalyzes the irreversible transfer of a propylamine group from the amino donor S-adenosylmethioninamine (decarboxy-AdoMet) to putrescine (1,4-diaminobutane) to yield spermidine. This is Polyamine aminopropyltransferase from Alkalilimnicola ehrlichii (strain ATCC BAA-1101 / DSM 17681 / MLHE-1).